An 85-amino-acid polypeptide reads, in one-letter code: MLLSVLLQATAAAVGVSKLGAAIGAGLAVIGAGLGIGKIGGSAMEAIARQPEASGDIRMNMIIAAALIEGVALLAVVVCLLVFFL.

A run of 2 helical transmembrane segments spans residues 22-39 (AIGAGLAVIGAGLGIGKI) and 65-85 (AALIEGVALLAVVVCLLVFFL).

Belongs to the ATPase C chain family. In terms of assembly, F-type ATPases have 2 components, F(1) - the catalytic core - and F(0) - the membrane proton channel. F(1) has five subunits: alpha(3), beta(3), gamma(1), delta(1), epsilon(1). F(0) has three main subunits: a(1), b(2) and c(10-14). The alpha and beta chains form an alternating ring which encloses part of the gamma chain. F(1) is attached to F(0) by a central stalk formed by the gamma and epsilon chains, while a peripheral stalk is formed by the delta and b chains.

It localises to the cell inner membrane. F(1)F(0) ATP synthase produces ATP from ADP in the presence of a proton or sodium gradient. F-type ATPases consist of two structural domains, F(1) containing the extramembraneous catalytic core and F(0) containing the membrane proton channel, linked together by a central stalk and a peripheral stalk. During catalysis, ATP synthesis in the catalytic domain of F(1) is coupled via a rotary mechanism of the central stalk subunits to proton translocation. Functionally, key component of the F(0) channel; it plays a direct role in translocation across the membrane. A homomeric c-ring of between 10-14 subunits forms the central stalk rotor element with the F(1) delta and epsilon subunits. This is ATP synthase subunit c from Bacteroides thetaiotaomicron (strain ATCC 29148 / DSM 2079 / JCM 5827 / CCUG 10774 / NCTC 10582 / VPI-5482 / E50).